We begin with the raw amino-acid sequence, 1030 residues long: uncharacterized protein (1030 aa).

Positions Met1–Glu15 are enriched in polar residues. The segment at Met1–Asn53 is disordered. The segment covering Gly16–Ser40 has biased composition (basic and acidic residues). A Phosphoserine modification is found at Ser41. In terms of domain architecture, Helicase ATP-binding spans Ile134–Cys290. Position 147 to 154 (Ala147 to Thr154) interacts with ATP. The DEVH box motif lies at Asp238 to His241. Residues Ser357 to Glu561 form the Helicase C-terminal domain.

It belongs to the helicase family. SKI2 subfamily.

It is found in the nucleus. This is an uncharacterized protein from Schizosaccharomyces pombe (strain 972 / ATCC 24843) (Fission yeast).